The sequence spans 508 residues: Mitochondrial distribution and morphology protein 10 (508 aa).

The disordered stretch occupies residues Pro160 to Asn195.

It belongs to the MDM10 family. In terms of assembly, component of the ER-mitochondria encounter structure (ERMES) or MDM complex, composed of MMM1, MDM10, MDM12 and MDM34. Associates with the mitochondrial outer membrane sorting assembly machinery SAM(core) complex.

The protein localises to the mitochondrion outer membrane. Functionally, component of the ERMES/MDM complex, which serves as a molecular tether to connect the endoplasmic reticulum and mitochondria. Components of this complex are involved in the control of mitochondrial shape and protein biogenesis and may function in phospholipid exchange. MDM10 is involved in the late assembly steps of the general translocase of the mitochondrial outer membrane (TOM complex). Functions in the TOM40-specific route of the assembly of outer membrane beta-barrel proteins, including the association of TOM40 with the receptor TOM22 and small TOM proteins. Can associate with the SAM(core) complex as well as the MDM12-MMM1 complex, both involved in late steps of the major beta-barrel assembly pathway, that is responsible for biogenesis of all outer membrane beta-barrel proteins. May act as a switch that shuttles between both complexes and channels precursor proteins into the TOM40-specific pathway. Plays a role in mitochondrial morphology and in the inheritance of mitochondria. This chain is Mitochondrial distribution and morphology protein 10, found in Cryptococcus neoformans var. neoformans serotype D (strain JEC21 / ATCC MYA-565) (Filobasidiella neoformans).